The following is a 264-amino-acid chain: ECF RNA polymerase sigma factor BldN (264 aa).

Residues 1–87 (MYPHVGVDAS…PAADSDSARM (87 aa)) are not required for transcription in vitro. Residues 64–83 (RSSSSGAAATTHRRPAADSD) are disordered. The segment at 105–172 (LYDQYSDTVY…LVADHFKSSR (68 aa)) is sigma-70 factor domain-2. The short motif at 129–132 (DLTS) is the Polymerase core binding element. Residues 204–255 (ALLDAVRRLNPQQQECVTLRFLQGLSVAETARVMGKNEGAIKTLQYRAVRTL) form a sigma-70 factor domain-4 region.

The protein belongs to the sigma-70 factor family. ECF subfamily. Post-translationally, two forms of protein exist; a 35 kDa form in early growth and a 28 kDa form seen in later stages (at protein level). In liquid culture the larger form accumulates to higher level than on solid media. The shorter form results from processing just upstream of Met-87; the exact position is unknown. There are 4 possible start codons; mutation of the first prevents protein production while mutation of the other 3 (Val-44, Met-87 and Met-88) permits production of both forms. Introduction of stop codons between the first and second, or second and third possible start codons also prevents protein production, corroborating that the annotated start codon is the correct one.

In terms of biological role, sigma factors are initiation factors that promote the attachment of RNA polymerase to specific initiation sites and are then released. Extracytoplasmic function (ECF) sigma factors are usually held in an inactive form by an anti-sigma factor until released. ECF sigma factor involved in aerial mycelium formation, required for translation from the bldMp1 promoter. Expressed as a preprotein; processing and accumulation of the mature protein starts as aerial mycelium formation and sporulation commence. Activates expression of about 17 genes, including those for rdlA and most of the chaplins (chpA to chpH); chaplin activation is indirect. The chain is ECF RNA polymerase sigma factor BldN from Streptomyces coelicolor (strain ATCC BAA-471 / A3(2) / M145).